We begin with the raw amino-acid sequence, 170 residues long: Thialysine N-epsilon-acetyltransferase (170 aa).

The N-acetyltransferase domain occupies V4–E166. Y27 to E28 lines the substrate pocket. K29 carries the post-translational modification N6-acetyllysine. E92 is a substrate binding site. Residues I94–V96, G102–S107, N133–R135, and Y140 contribute to the acetyl-CoA site. The Proton donor role is filled by Y140. E152 lines the substrate pocket.

Belongs to the acetyltransferase family. In terms of assembly, homodimer.

It is found in the cytoplasm. The catalysed reaction is S-(2-aminoethyl)-L-cysteine + acetyl-CoA = S-(2-acetamidoethyl)-L-cysteine + CoA + H(+). The enzyme catalyses an alkane-alpha,omega-diamine + acetyl-CoA = an N-acetylalkane-alpha,omega-diamine + CoA + H(+). In terms of biological role, catalyzes the N-acetylation of the amino acid thialysine (S-(2-aminoethyl)-L-cysteine), a L-lysine analog with the 4-methylene group substituted with a sulfur. May also catalyze acetylation of polyamines, such as norspermidine, spermidine or spermine. However, ability to acetylate polyamines is weak, suggesting that it does not act as a diamine acetyltransferase in vivo. The polypeptide is Thialysine N-epsilon-acetyltransferase (Bos taurus (Bovine)).